A 475-amino-acid polypeptide reads, in one-letter code: Coagulation factor X (475 aa).

An N-terminal signal peptide occupies residues 1-20 (MAGRLLLLLLCAALPDELRA). Positions 21 to 40 (EGGVFIKKESADKFLERTKR) are excised as a propeptide. The 45-residue stretch at 41-85 (ANSFLEEMKQGNIERECNEERCSKEEAREAFEDNEKTEEFWNIYV) folds into the Gla domain. 11 positions are modified to 4-carboxyglutamate: glutamate 46, glutamate 47, glutamate 54, glutamate 56, glutamate 59, glutamate 60, glutamate 65, glutamate 66, glutamate 69, glutamate 72, and glutamate 79. An intrachain disulfide couples cysteine 57 to cysteine 62. The region spanning 86-122 (DGDQCSSNPCHYGGQCKDGLGSYTCSCLDGYQGKNCE) is the EGF-like 1; calcium-binding domain. 11 disulfide bridges follow: cysteine 90/cysteine 101, cysteine 95/cysteine 110, cysteine 112/cysteine 121, cysteine 129/cysteine 140, cysteine 136/cysteine 152, cysteine 154/cysteine 167, cysteine 175/cysteine 348, cysteine 247/cysteine 252, cysteine 267/cysteine 283, cysteine 396/cysteine 410, and cysteine 421/cysteine 449. Aspartate 103 carries the post-translational modification (3R)-3-hydroxyaspartate. The EGF-like 2 domain occupies 125 to 168 (IPKYCKINNGDCEQFCSIKKSVQKDVVCSCTSGYELAEDGKQCV). A propeptide spans 186–240 (SVILPTNSNTNATSDQDVPSTNGSILEEVFTTTTESPTPPPRNGSSITDPNVDTR) (activation peptide). N-linked (GlcNAc...) asparagine glycosylation is found at asparagine 196, asparagine 207, and asparagine 228. The segment at 216-237 (TTTTESPTPPPRNGSSITDPNV) is disordered. Residues 241–473 (IVGGDECRPG…FLRWVRTVMR (233 aa)) form the Peptidase S1 domain. Residue histidine 282 is the Charge relay system of the active site. An N-linked (GlcNAc...) asparagine glycan is attached at asparagine 285. Aspartate 328 acts as the Charge relay system in catalysis. The active-site Charge relay system is serine 425.

The protein belongs to the peptidase S1 family. As to quaternary structure, the two chains are formed from a single-chain precursor by the excision of two Arg residues and are held together by 1 or more disulfide bonds. The vitamin K-dependent, enzymatic carboxylation of some glutamate residues allows the modified protein to bind calcium. Post-translationally, the activation peptide is cleaved by factor IXa (in the intrinsic pathway), or by factor VIIa (in the extrinsic pathway). In terms of processing, the iron and 2-oxoglutarate dependent 3-hydroxylation of aspartate and asparagine is (R) stereospecific within EGF domains. In terms of tissue distribution, liver and chorioallantoic membrane.

Its subcellular location is the secreted. The enzyme catalyses Selective cleavage of Arg-|-Thr and then Arg-|-Ile bonds in prothrombin to form thrombin.. In terms of biological role, factor Xa is a vitamin K-dependent glycoprotein that converts prothrombin to thrombin in the presence of factor Va, calcium and phospholipid during blood clotting. VAP cleaves the fusion proteins of Sendai virus, NDV, and influenza virus a at a specific single arginine-containing site, and plays a key role in the viral spreading in the allantoic sac. The protein is Coagulation factor X (F10) of Gallus gallus (Chicken).